The following is a 369-amino-acid chain: Choline kinase B2 (369 aa).

It belongs to the choline/ethanolamine kinase family. The cofactor is Mg(2+).

It carries out the reaction choline + ATP = phosphocholine + ADP + H(+). The protein operates within phospholipid metabolism; phosphatidylcholine biosynthesis; phosphocholine from choline: step 1/1. Its function is as follows. Catalyzes the first step in phosphatidylcholine biosynthesis. Phosphorylates choline. The polypeptide is Choline kinase B2 (ckb-2) (Caenorhabditis elegans).